We begin with the raw amino-acid sequence, 134 residues long: Profilin-2 (134 aa).

An intrachain disulfide couples Cys-13 to Cys-118. The short motif at 84–100 (AVIRGKKGSGGITIKKT) is the Involved in PIP2 interaction element. A Phosphothreonine modification is found at Thr-114.

This sequence belongs to the profilin family. In terms of assembly, occurs in many kinds of cells as a complex with monomeric actin in a 1:1 ratio. Phosphorylated by MAP kinases.

The protein resides in the cytoplasm. It localises to the cytoskeleton. Its function is as follows. Binds to actin and affects the structure of the cytoskeleton. At high concentrations, profilin prevents the polymerization of actin, whereas it enhances it at low concentrations. The protein is Profilin-2 of Olea europaea (Common olive).